Consider the following 404-residue polypeptide: Putative Peroxidase 48 (404 aa).

Positions 1–18 (MRFLGDYKFALLTCSVIA) are cleaved as a signal peptide. 4 cysteine pairs are disulfide-bonded: C77–C156, C110–C115, C162–C397, and C241–C273. Catalysis depends on H108, which acts as the Proton acceptor. Ca(2+)-binding residues include D109, I112, G114, D116, and S118. N-linked (GlcNAc...) asparagine glycosylation is present at N136. Position 204 (P204) interacts with substrate. H234 lines the heme b pocket. S235 serves as a coordination point for Ca(2+). N250 is a glycosylation site (N-linked (GlcNAc...) asparagine). The tract at residues 276 to 307 (SVSTSSPSAPPDIGLPPSLPASDSENSYGMSS) is disordered. Residues 283-294 (SAPPDIGLPPSL) are compositionally biased toward pro residues. Residue D287 participates in Ca(2+) binding. Over residues 296 to 307 (ASDSENSYGMSS) the composition is skewed to polar residues.

Belongs to the peroxidase family. Classical plant (class III) peroxidase subfamily. The cofactor is heme b. Ca(2+) is required as a cofactor.

Its subcellular location is the secreted. It carries out the reaction 2 a phenolic donor + H2O2 = 2 a phenolic radical donor + 2 H2O. Functionally, removal of H(2)O(2), oxidation of toxic reductants, biosynthesis and degradation of lignin, suberization, auxin catabolism, response to environmental stresses such as wounding, pathogen attack and oxidative stress. These functions might be dependent on each isozyme/isoform in each plant tissue. This chain is Putative Peroxidase 48 (PER48), found in Arabidopsis thaliana (Mouse-ear cress).